The following is a 370-amino-acid chain: StAR-related lipid transfer protein 7, mitochondrial (370 aa).

The N-terminal 58 residues, 1 to 58 (MLPRRLLAAWLAGTRGGGLLALLANQCRFVTGLRVRRAQQIAQLYGRLYSESSRRVLL), are a transit peptide targeting the mitochondrion. Residues 86-111 (DEERIQEEELQRSINEMKRLEEMSNM) are a coiled coil. 2 disordered regions span residues 111–138 (MFQS…EGKE) and 343–370 (MSSE…IEYA). One can recognise an START domain in the interval 112–327 (FQSSGVQHHP…LHMATLKAKN (216 aa)).

In terms of processing, proteolytically cleaved by PARL. In terms of tissue distribution, expressed in nasal epithelial cells. Down-regulated in nasal epithelial cells in patients experiencing an asthma exacerbation as compared to stable asthmatics and healthy controls.

The protein localises to the mitochondrion. Its function is as follows. May play a protective role in mucosal tissues by preventing exaggerated allergic responses. This is StAR-related lipid transfer protein 7, mitochondrial (STARD7) from Homo sapiens (Human).